Consider the following 204-residue polypeptide: Mediator of RNA polymerase II transcription subunit 31 (204 aa).

The interval 134–204 (QQQQQQANGM…SGANIKLELN (71 aa)) is disordered. Over residues 161-194 (SASTADSQQTSSALQPVQAQPGNPQQQQQINGVA) the composition is skewed to low complexity.

Belongs to the Mediator complex subunit 31 family. In terms of assembly, component of the Mediator complex, which includes at least MED4, MED6, MED14, MED17, MED18, MED20, MED21, MED23, MED24, MED27, MED30 and MED31.

The protein localises to the nucleus. Functionally, component of the Mediator complex, a coactivator involved in the regulated transcription of nearly all RNA polymerase II-dependent genes. Mediator functions as a bridge to convey information from gene-specific regulatory proteins to the basal RNA polymerase II transcription machinery. Mediator is recruited to promoters by direct interactions with regulatory proteins and serves as a scaffold for the assembly of a functional preinitiation complex with RNA polymerase II and the general transcription factors. Required for activated transcription of the MtnA gene. In Drosophila melanogaster (Fruit fly), this protein is Mediator of RNA polymerase II transcription subunit 31 (MED31).